The primary structure comprises 224 residues: Myogenin (224 aa).

Residues Ser77 and Ser79 each carry the phosphoserine; by CaMK2G modification. Residues 81–132 (DRRRAATLREKRRLKKVNEAFEALKRSTLLNPNQRLPKVEILRSAIQYIERL) form the bHLH domain. At Thr87 the chain carries Phosphothreonine; by CaMK2G.

In terms of assembly, homodimer and heterodimer with E12; heterodimerization enhances MYOG DNA-binding and transcriptional activities. Interacts with SMARCA4/BRG1/BAF190A. Interacts (via C-terminal region) with SSRP1 and SUPT16H; the interaction is indicative of an interaction with the FACT complex. nteracts with CSRP3. Phosphorylated by CAMK2G on threonine and serine amino acids in a muscle activity-dependent manner. Phosphorylation of Thr-87 impairs both DNA-binding and trans-activation functions in contracting muscles. As to expression, expressed in myoblast cells. Expressed weakly in myotubes (at protein level). Expressed strongly in denervated muscles and in satellite cells isolated from denervated muscles. Expressed weakly in innervated muscle and in satellite cells isolated from innervated muscles.

The protein localises to the nucleus. Acts as a transcriptional activator that promotes transcription of muscle-specific target genes and plays a role in muscle differentiation, cell cycle exit and muscle atrophy. Essential for the development of functional embryonic skeletal fiber muscle differentiation. However is dispensable for postnatal skeletal muscle growth; phosphorylation by CAMK2G inhibits its transcriptional activity in respons to muscle activity. Required for the recruitment of the FACT complex to muscle-specific promoter regions, thus promoting gene expression initiation. During terminal myoblast differentiation, plays a role as a strong activator of transcription at loci with an open chromatin structure previously initiated by MYOD1. Together with MYF5 and MYOD1, co-occupies muscle-specific gene promoter core regions during myogenesis. Also cooperates with myocyte-specific enhancer factor MEF2D and BRG1-dependent recruitment of SWI/SNF chromatin-remodeling enzymes to alter chromatin structure at myogenic late gene promoters. Facilitates cell cycle exit during terminal muscle differentiation through the up-regulation of miR-20a expression, which in turn represses genes involved in cell cycle progression. Binds to the E-box containing (E1) promoter region of the miR-20a gene. Also plays a role in preventing reversal of muscle cell differentiation. Contributes to the atrophy-related gene expression in adult denervated muscles. Induces fibroblasts to differentiate into myoblasts. This is Myogenin (Myog) from Mus musculus (Mouse).